The chain runs to 237 residues: UPF0280 protein Mbur_0309 (237 aa).

It belongs to the UPF0280 family.

This chain is UPF0280 protein Mbur_0309, found in Methanococcoides burtonii (strain DSM 6242 / NBRC 107633 / OCM 468 / ACE-M).